Reading from the N-terminus, the 420-residue chain is Serine hydroxymethyltransferase (420 aa).

(6S)-5,6,7,8-tetrahydrofolate contacts are provided by residues leucine 121 and 125 to 127 (GHL). An N6-(pyridoxal phosphate)lysine modification is found at lysine 229.

Belongs to the SHMT family. Homodimer. The cofactor is pyridoxal 5'-phosphate.

It is found in the cytoplasm. It catalyses the reaction (6R)-5,10-methylene-5,6,7,8-tetrahydrofolate + glycine + H2O = (6S)-5,6,7,8-tetrahydrofolate + L-serine. It functions in the pathway one-carbon metabolism; tetrahydrofolate interconversion. The protein operates within amino-acid biosynthesis; glycine biosynthesis; glycine from L-serine: step 1/1. Its function is as follows. Catalyzes the reversible interconversion of serine and glycine with tetrahydrofolate (THF) serving as the one-carbon carrier. This reaction serves as the major source of one-carbon groups required for the biosynthesis of purines, thymidylate, methionine, and other important biomolecules. Also exhibits THF-independent aldolase activity toward beta-hydroxyamino acids, producing glycine and aldehydes, via a retro-aldol mechanism. The chain is Serine hydroxymethyltransferase from Glaesserella parasuis serovar 5 (strain SH0165) (Haemophilus parasuis).